Reading from the N-terminus, the 153-residue chain is MADTLMSDIPFWQRKTLDEMTDAEWESLCDGCGQCCLHKLMDEDTDEIYFTNVACRQLNIKTCQCRHYERRFEFEPDCIKLTRENLPDFEWLPMTCAYRLLAEGKPLPTWHPLLTGSKAAMHGERISVRHIAVKESEVRDWQDHILNKPSWAE.

This sequence belongs to the UPF0260 family.

The sequence is that of UPF0260 protein YcgN from Salmonella agona (strain SL483).